The following is a 166-amino-acid chain: Cyclic pyranopterin monophosphate synthase (166 aa).

Substrate-binding positions include 75–77 and 115–116; these read MCH and ME. Asp130 is an active-site residue.

Belongs to the MoaC family. In terms of assembly, homohexamer; trimer of dimers.

The enzyme catalyses (8S)-3',8-cyclo-7,8-dihydroguanosine 5'-triphosphate = cyclic pyranopterin phosphate + diphosphate. It participates in cofactor biosynthesis; molybdopterin biosynthesis. Functionally, catalyzes the conversion of (8S)-3',8-cyclo-7,8-dihydroguanosine 5'-triphosphate to cyclic pyranopterin monophosphate (cPMP). This chain is Cyclic pyranopterin monophosphate synthase, found in Shouchella clausii (strain KSM-K16) (Alkalihalobacillus clausii).